The sequence spans 452 residues: Imaginal disk growth factor 6 (452 aa).

Residues 1 to 18 (MIIKALAIVSLCLASIQA) form the signal peptide. In terms of domain architecture, GH18 spans 29–452 (KHLVCYYDSA…LRAIKYRLTN (424 aa)). An intrachain disulfide couples Cys33 to Cys60. The N-linked (GlcNAc...) asparagine glycan is linked to Asn233. A disulfide bridge connects residues Cys352 and Cys435.

Belongs to the glycosyl hydrolase 18 family. IDGF subfamily. Glycosylated. In larvae, it is expressed in the fat body and by hemocytes.

It localises to the secreted. Its function is as follows. Probably required to stimulate the proliferation, polarization and motility of imaginal disk cells. May act by stabilizing the binding of insulin-like peptides to its receptor through a simultaneous interaction with both molecules to form a multiprotein signaling complex. The sequence is that of Imaginal disk growth factor 6 from Drosophila melanogaster (Fruit fly).